A 305-amino-acid polypeptide reads, in one-letter code: Diacylglycerol kinase (305 aa).

Positions 1 to 132 (MRKRARIIYN…VDIGKMNSRY (132 aa)) constitute a DAGKc domain. ATP is bound by residues 10-14 (NPTSG), threonine 41, 67-73 (GDGTLNE), and threonine 94. 3 residues coordinate Mg(2+): lysine 213, aspartate 216, and tyrosine 218. The active-site Proton acceptor is the glutamate 273.

Belongs to the diacylglycerol/lipid kinase family. Homodimer. The cofactor is Mg(2+).

It catalyses the reaction a 1,2-diacyl-sn-glycerol + ATP = a 1,2-diacyl-sn-glycero-3-phosphate + ADP + H(+). Functionally, catalyzes the phosphorylation of diacylglycerol (DAG) into phosphatidic acid. Is a key enzyme involved in the production of lipoteichoic acid by reintroducing DAG formed from the breakdown of membrane phospholipids into the phosphatidylglycerol biosynthetic pathway. The protein is Diacylglycerol kinase (dagK) of Staphylococcus saprophyticus subsp. saprophyticus (strain ATCC 15305 / DSM 20229 / NCIMB 8711 / NCTC 7292 / S-41).